A 341-amino-acid polypeptide reads, in one-letter code: Very-long-chain 3-oxoacyl-CoA reductase (341 aa).

A helical membrane pass occupies residues 17–37; it reads ALYGALLLGVYKLTTFALSLV. NADP(+)-binding residues include valine 63, aspartate 117, asparagine 144, tyrosine 218, lysine 222, valine 251, and serine 253. The active-site Proton donor is tyrosine 218. The Lowers pKa of active site Tyr role is filled by lysine 222.

The protein belongs to the short-chain dehydrogenases/reductases (SDR) family.

It is found in the endoplasmic reticulum membrane. The catalysed reaction is a very-long-chain (3R)-3-hydroxyacyl-CoA + NADP(+) = a very-long-chain 3-oxoacyl-CoA + NADPH + H(+). Its pathway is lipid metabolism; fatty acid biosynthesis. Component of the microsomal membrane bound fatty acid elongation system, which produces the 26-carbon very long-chain fatty acids (VLCFA) from palmitate. Catalyzes the reduction of the 3-ketoacyl-CoA intermediate that is formed in each cycle of fatty acid elongation. VLCFAs serve as precursors for ceramide and sphingolipids. The sequence is that of Very-long-chain 3-oxoacyl-CoA reductase from Meyerozyma guilliermondii (strain ATCC 6260 / CBS 566 / DSM 6381 / JCM 1539 / NBRC 10279 / NRRL Y-324) (Yeast).